Here is a 248-residue protein sequence, read N- to C-terminus: Tyrosine recombinase XerD-like (248 aa).

Residues 1-72 (MIAFIEPFLA…TVNQFLYYLY (72 aa)) form the Core-binding (CB) domain. One can recognise a Tyr recombinase domain in the interval 92–248 (SLKPQLTRLD…PITLEKYYKM (157 aa)). Residue Arg-213 is part of the active site. Catalysis depends on Tyr-245, which acts as the O-(3'-phospho-DNA)-tyrosine intermediate.

This sequence belongs to the 'phage' integrase family. XerD-like subfamily.

The protein localises to the cytoplasm. Putative tyrosine recombinase. Not involved in the cutting and rejoining of the recombining DNA molecules on dif(SL) site. This Streptococcus equi subsp. zooepidemicus (strain H70) protein is Tyrosine recombinase XerD-like.